The primary structure comprises 329 residues: Flotillin-like protein FloA (329 aa).

A helical membrane pass occupies residues Ile4–Val24.

This sequence belongs to the flotillin-like FloA family. Homooligomerizes.

The protein resides in the cell membrane. Its subcellular location is the membrane raft. Found in functional membrane microdomains (FMM) that may be equivalent to eukaryotic membrane rafts. FMMs are highly dynamic and increase in number as cells age. Flotillins are thought to be important factors in membrane fluidity. The sequence is that of Flotillin-like protein FloA from Dictyoglomus turgidum (strain DSM 6724 / Z-1310).